The following is a 230-amino-acid chain: Orotidine 5'-phosphate decarboxylase (230 aa).

Residues D10, K31, 58 to 67 (DLKLHDIPNT), T117, R179, Q188, G208, and R209 contribute to the substrate site. Catalysis depends on K60, which acts as the Proton donor.

It belongs to the OMP decarboxylase family. Type 1 subfamily. In terms of assembly, homodimer.

It catalyses the reaction orotidine 5'-phosphate + H(+) = UMP + CO2. Its pathway is pyrimidine metabolism; UMP biosynthesis via de novo pathway; UMP from orotate: step 2/2. Its function is as follows. Catalyzes the decarboxylation of orotidine 5'-monophosphate (OMP) to uridine 5'-monophosphate (UMP). The chain is Orotidine 5'-phosphate decarboxylase from Staphylococcus haemolyticus (strain JCSC1435).